We begin with the raw amino-acid sequence, 104 residues long: Large ribosomal subunit protein bL21 (104 aa).

It belongs to the bacterial ribosomal protein bL21 family. Part of the 50S ribosomal subunit. Contacts protein L20.

Its function is as follows. This protein binds to 23S rRNA in the presence of protein L20. The sequence is that of Large ribosomal subunit protein bL21 from Streptococcus mutans serotype c (strain ATCC 700610 / UA159).